Here is a 353-residue protein sequence, read N- to C-terminus: Interferon-stimulated 20 kDa exonuclease-like 2 (353 aa).

Disordered stretches follow at residues 1 to 93 and 125 to 172; these read MSTL…QPLD and ALPK…SGAS. Residues 14–23 are compositionally biased toward basic and acidic residues; sequence PPKKALEGNA. The segment covering 24–35 has biased composition (basic residues); it reads KHRNFVKKRRLL. The span at 54–63 shows a compositional bias: basic and acidic residues; it reads LHSEPSKKGE. A compositionally biased stretch (basic residues) spans 135–151; it reads RSQKKSSQKKSSKKNHP. Positions 152–172 are enriched in polar residues; that stretch reads QKNAPQNSTQAHSENKCSGAS. Positions 178 to 353 constitute an Exonuclease domain; sequence KMVAIDCEMV…EHLARNPPTD (176 aa).

The protein localises to the nucleus. It is found in the nucleolus. Functionally, 3'-&gt; 5'-exoribonuclease involved in ribosome biogenesis in the processing of the 12S pre-rRNA. Displays a strong specificity for a 3'-end containing a free hydroxyl group. This is Interferon-stimulated 20 kDa exonuclease-like 2 (ISG20L2) from Homo sapiens (Human).